Here is a 153-residue protein sequence, read N- to C-terminus: Deoxyuridine 5'-triphosphate nucleotidohydrolase (153 aa).

Substrate is bound by residues arginine 71–glycine 73, asparagine 84, leucine 88–aspartate 90, and methionine 98.

It belongs to the dUTPase family. Mg(2+) serves as cofactor.

The enzyme catalyses dUTP + H2O = dUMP + diphosphate + H(+). The protein operates within pyrimidine metabolism; dUMP biosynthesis; dUMP from dCTP (dUTP route): step 2/2. In terms of biological role, this enzyme is involved in nucleotide metabolism: it produces dUMP, the immediate precursor of thymidine nucleotides and it decreases the intracellular concentration of dUTP so that uracil cannot be incorporated into DNA. The polypeptide is Deoxyuridine 5'-triphosphate nucleotidohydrolase (Hydrogenovibrio crunogenus (strain DSM 25203 / XCL-2) (Thiomicrospira crunogena)).